Here is a 1314-residue protein sequence, read N- to C-terminus: Condensin-2 complex subunit CAP-D3 (1314 aa).

HEAT repeat units follow at residues 20-58 (ESDYHELVTDLKSLLDTDDDEILNRFYGSLSSMASSFLR), 98-136 (PIAFLSLLGSIRRYLKRRDDSAGQGSNSQREKGNKKKRG), 184-222 (KSLVQTVSEIPLLALEHSGVLNYDRLMEMCGKILGGVLN), 231-267 (TAAEISKSLTPLLLMGKHQARSFALGFVSRKLMSLAK), 269-310 (NPEL…AMEV), 331-360 (RVLAVDIIPLLISSLGNPLGDISSENGLKD), 361-398 (SWGLGCIDALVQRCSDTSALIRARALSNLAQVVEFLSG), 417-455 (SEGKGAVTDLLKKRCVDEKAAVRRAALLLVTKLTSLMGG), 457-493 (FDGSILKTMGTSCSDPLISIRKAAVSAISEAFRICTD), and 494-532 (EIVTTEWLHSVPRMIMDNETSIQEECENVFHELVLERIL). Residues 116–150 (DDSAGQGSNSQREKGNKKKRGRGKRNLGYEDGEET) form a disordered region. Residues 130-140 (GNKKKRGRGKR) show a composition bias toward basic residues. A Nuclear localization signal motif is present at residues 789–796 (SRRSKRLD). 6 HEAT repeats span residues 821-859 (SADTTKIVPFLHTVITSGNSDSKLKNKLPQANVCLKQKA), 878-916 (GKLAKRYLPLFAQELEKSDCAALRNNLVVAMTDFCVHYT), 917-954 (AMIECYIPKITKRLRDPCEVVRRQTFILLSRLLQRDYV), 956-992 (WRGVLFLRFLLSLVDESEKIRRLADFLFGSILKVKAP), 1053-1091 (QMAPEHLLATFAKLCAEILAAASDGMLNIEDVTGQSVLQ), and 1138-1179 (KGLI…DYKN). Disordered regions lie at residues 1210–1237 (MANQGVACGTSHRNGEPEASAASEENVR) and 1265–1314 (VNGG…DDES).

Component of the condensin-2 complex. As to expression, present in buds.

The protein localises to the nucleus. Its subcellular location is the chromosome. Its function is as follows. Regulatory subunit of the condensin-2 complex, a complex which establishes mitotic chromosome architecture and is involved in physical rigidity of the chromatid axis. May promote the resolution of double-strand DNA catenanes (intertwines) between sister chromatids. Required for plant vigor, fertility, chromatin condensation and sister chromatid cohesion both during mitosis and meiosis. Necessary to maintain normal structural integrity of the meiotic chromosomes during the two nuclear divisions of gametogenesis, especially to prevent interchromosome connections at metaphase I. Seems also involved in crossover formation during meiotic prophase I. Prevents centromeric and pericentromeric heterochromatin repeats association. This Arabidopsis thaliana (Mouse-ear cress) protein is Condensin-2 complex subunit CAP-D3.